The primary structure comprises 273 residues: Ribosomal RNA small subunit methyltransferase A (273 aa).

S-adenosyl-L-methionine is bound by residues asparagine 18, leucine 20, glycine 45, glutamate 66, aspartate 91, and asparagine 113.

It belongs to the class I-like SAM-binding methyltransferase superfamily. rRNA adenine N(6)-methyltransferase family. RsmA subfamily.

The protein resides in the cytoplasm. The enzyme catalyses adenosine(1518)/adenosine(1519) in 16S rRNA + 4 S-adenosyl-L-methionine = N(6)-dimethyladenosine(1518)/N(6)-dimethyladenosine(1519) in 16S rRNA + 4 S-adenosyl-L-homocysteine + 4 H(+). Specifically dimethylates two adjacent adenosines (A1518 and A1519) in the loop of a conserved hairpin near the 3'-end of 16S rRNA in the 30S particle. May play a critical role in biogenesis of 30S subunits. This chain is Ribosomal RNA small subunit methyltransferase A, found in Escherichia coli O81 (strain ED1a).